The primary structure comprises 381 residues: Fatty acid elongase 6 (381 aa).

The next 7 membrane-spanning stretches (helical) occupy residues 10–30, 69–89, 107–127, 153–173, 182–202, 216–236, and 280–300; these read IAAA…LVYS, LPYL…SLIV, GLVH…GLMI, LIWL…IMLL, FLHV…LLVA, GVHV…SGIV, and LLQI…NFLV. The HxxHH motif motif lies at 184–188; the sequence is HVYHH. Catalysis depends on H187, which acts as the Nucleophile. The interval 362–381 is disordered; that stretch reads RKNGNGNGQKASLQAMAGSR.

It belongs to the ELO family.

It localises to the membrane. It functions in the pathway lipid metabolism; polyunsaturated fatty acid biosynthesis. Functionally, involved in the synthesis of fatty acids. Elongates C18 polyunsaturated fatty acids (PUFAs) with a preference for Delta6 PUFAs. The protein is Fatty acid elongase 6 of Leishmania major.